We begin with the raw amino-acid sequence, 554 residues long: Hedycaryol synthase (554 aa).

5 residues coordinate (2E,6E)-farnesyl diphosphate: Arg-270, Asp-307, Asp-311, Arg-449, and Asp-452. Mg(2+) is bound by residues Asp-307 and Asp-311. Positions 307–311 (DDTYD) match the DDXXD motif motif. Residues Asp-452, Ser-456, and Glu-460 each contribute to the Mg(2+) site.

This sequence belongs to the terpene synthase family. Mg(2+) serves as cofactor. Specifically expressed in flowers.

It catalyses the reaction (2E,6E)-farnesyl diphosphate + H2O = (2E,6E)-hedycaryol + diphosphate. The protein operates within secondary metabolite biosynthesis; terpenoid biosynthesis. Functionally, sesquiterpene synthase that catalyzes the formation of sesquiterpenes and sesquiterpenoid alcohols. Converts farnesyl diphosphate (FPP) to hedycaryol. Hedycaryol is likely to be one of the terpenes that attract insects for pollination of Camellia brevistyla. This is Hedycaryol synthase from Camellia brevistyla.